Reading from the N-terminus, the 330-residue chain is Putative 4-hydroxythreonine-4-phosphate dehydrogenase (330 aa).

A divalent metal cation is bound by residues H169, H213, and H263.

This sequence belongs to the PdxA family. As to quaternary structure, homodimer. Zn(2+) serves as cofactor. The cofactor is Mg(2+). Co(2+) is required as a cofactor.

It localises to the cytoplasm. It carries out the reaction 4-(phosphooxy)-L-threonine + NAD(+) = 3-amino-2-oxopropyl phosphate + CO2 + NADH. Its pathway is cofactor biosynthesis; pyridoxine 5'-phosphate biosynthesis; pyridoxine 5'-phosphate from D-erythrose 4-phosphate: step 4/5. In terms of biological role, catalyzes the NAD(P)-dependent oxidation of 4-(phosphooxy)-L-threonine (HTP) into 2-amino-3-oxo-4-(phosphooxy)butyric acid which spontaneously decarboxylates to form 3-amino-2-oxopropyl phosphate (AHAP). The sequence is that of Putative 4-hydroxythreonine-4-phosphate dehydrogenase from Novosphingobium aromaticivorans (Sphingomonas aromaticivorans).